Here is a 415-residue protein sequence, read N- to C-terminus: Homoserine O-succinyltransferase (415 aa).

Residues 1 to 26 (MTSPALTAASVTPSRNTTSPDTTSHR) show a composition bias toward polar residues. The interval 1-27 (MTSPALTAASVTPSRNTTSPDTTSHRP) is disordered. An AB hydrolase-1 domain is found at 71-386 (NAVLICHALN…HGHDAFLLED (316 aa)). Serine 177 (nucleophile) is an active-site residue. Arginine 247 is a binding site for substrate. Catalysis depends on residues aspartate 346 and histidine 379. Aspartate 380 lines the substrate pocket.

Belongs to the AB hydrolase superfamily. MetX family. In terms of assembly, homodimer.

Its subcellular location is the cytoplasm. The catalysed reaction is L-homoserine + succinyl-CoA = O-succinyl-L-homoserine + CoA. It functions in the pathway amino-acid biosynthesis; L-methionine biosynthesis via de novo pathway; O-succinyl-L-homoserine from L-homoserine: step 1/1. Transfers a succinyl group from succinyl-CoA to L-homoserine, forming succinyl-L-homoserine. In Bordetella avium (strain 197N), this protein is Homoserine O-succinyltransferase.